Here is a 497-residue protein sequence, read N- to C-terminus: Serine hydroxymethyltransferase, mitochondrial (497 aa).

The transit peptide at 1 to 27 (MFIRRLHTSSRRLTCGEALRACQQTGA) directs the protein to the mitochondrion. An N6-(pyridoxal phosphate)lysine modification is found at Lys-272.

It belongs to the SHMT family. Homotetramer. It depends on pyridoxal 5'-phosphate as a cofactor.

It localises to the mitochondrion. The catalysed reaction is (6R)-5,10-methylene-5,6,7,8-tetrahydrofolate + glycine + H2O = (6S)-5,6,7,8-tetrahydrofolate + L-serine. It participates in one-carbon metabolism; tetrahydrofolate interconversion. Interconversion of serine and glycine. This Eremothecium gossypii (strain ATCC 10895 / CBS 109.51 / FGSC 9923 / NRRL Y-1056) (Yeast) protein is Serine hydroxymethyltransferase, mitochondrial (SHM1).